The chain runs to 63 residues: Hyphancin-3D (63 aa).

Positions methionine 1–alanine 22 are cleaved as a signal peptide. Residues alanine 23–proline 26 constitute a propeptide, removed by a dipeptidylpeptidase. Leucine 61 is subject to Leucine amide.

Belongs to the cecropin family.

It localises to the secreted. In terms of biological role, has antibacterial activity. This chain is Hyphancin-3D, found in Hyphantria cunea (Fall webworm moth).